We begin with the raw amino-acid sequence, 66 residues long: Large ribosomal subunit protein bL35 (66 aa).

A compositionally biased stretch (basic residues) spans 1 to 16 (MPKQKTHRASAKRFKR). The interval 1–21 (MPKQKTHRASAKRFKRTGNGG) is disordered.

The protein belongs to the bacterial ribosomal protein bL35 family.

This is Large ribosomal subunit protein bL35 from Lactococcus lactis subsp. cremoris (strain MG1363).